The chain runs to 475 residues: Ribulose bisphosphate carboxylase large chain (475 aa).

Residues 1-2 constitute a propeptide that is removed on maturation; it reads MS. Pro3 bears the N-acetylproline mark. Residue Lys14 is modified to N6,N6,N6-trimethyllysine. 2 residues coordinate substrate: Asn123 and Thr173. Residue Lys175 is the Proton acceptor of the active site. Lys177 is a substrate binding site. Residues Lys201, Asp203, and Glu204 each contribute to the Mg(2+) site. N6-carboxylysine is present on Lys201. Residue His294 is the Proton acceptor of the active site. Substrate-binding residues include Arg295, His327, and Ser379.

This sequence belongs to the RuBisCO large chain family. Type I subfamily. In terms of assembly, heterohexadecamer of 8 large chains and 8 small chains; disulfide-linked. The disulfide link is formed within the large subunit homodimers. Requires Mg(2+) as cofactor. The disulfide bond which can form in the large chain dimeric partners within the hexadecamer appears to be associated with oxidative stress and protein turnover.

The protein resides in the plastid. It is found in the chloroplast. The enzyme catalyses 2 (2R)-3-phosphoglycerate + 2 H(+) = D-ribulose 1,5-bisphosphate + CO2 + H2O. The catalysed reaction is D-ribulose 1,5-bisphosphate + O2 = 2-phosphoglycolate + (2R)-3-phosphoglycerate + 2 H(+). Its function is as follows. RuBisCO catalyzes two reactions: the carboxylation of D-ribulose 1,5-bisphosphate, the primary event in carbon dioxide fixation, as well as the oxidative fragmentation of the pentose substrate in the photorespiration process. Both reactions occur simultaneously and in competition at the same active site. This is Ribulose bisphosphate carboxylase large chain from Illicium oligandrum (Star anise).